We begin with the raw amino-acid sequence, 409 residues long: LL-diaminopimelate aminotransferase (409 aa).

Tyr15 and Gly42 together coordinate substrate. Residues Tyr72, 108–109 (AK), Tyr132, Asn186, Tyr217, and 245–247 (SFS) each bind pyridoxal 5'-phosphate. Residues Lys109, Tyr132, and Asn186 each coordinate substrate. An N6-(pyridoxal phosphate)lysine modification is found at Lys248. Arg256 and Asn291 together coordinate pyridoxal 5'-phosphate. Substrate contacts are provided by Asn291 and Arg386.

The protein belongs to the class-I pyridoxal-phosphate-dependent aminotransferase family. LL-diaminopimelate aminotransferase subfamily. Homodimer. The cofactor is pyridoxal 5'-phosphate.

It carries out the reaction (2S,6S)-2,6-diaminopimelate + 2-oxoglutarate = (S)-2,3,4,5-tetrahydrodipicolinate + L-glutamate + H2O + H(+). It participates in amino-acid biosynthesis; L-lysine biosynthesis via DAP pathway; LL-2,6-diaminopimelate from (S)-tetrahydrodipicolinate (aminotransferase route): step 1/1. In terms of biological role, involved in the synthesis of meso-diaminopimelate (m-DAP or DL-DAP), required for both lysine and peptidoglycan biosynthesis. Catalyzes the direct conversion of tetrahydrodipicolinate to LL-diaminopimelate. This is LL-diaminopimelate aminotransferase from Desulforapulum autotrophicum (strain ATCC 43914 / DSM 3382 / VKM B-1955 / HRM2) (Desulfobacterium autotrophicum).